A 202-amino-acid polypeptide reads, in one-letter code: Prohormone-4 (202 aa).

The signal sequence occupies residues 1 to 28 (MVQRLCTSVAALSLALSACVFFPRAVMA). An LDL-receptor class A domain is found at 46–86 (ACRPYEPFKCPGDDTCISIQYLCDGAPDCQDGYDEDSRLCT). 3 disulfides stabilise this stretch: Cys47–Cys61, Cys55–Cys74, and Cys68–Cys85.

It is found in the secreted. This is Prohormone-4 from Apis mellifera (Honeybee).